Reading from the N-terminus, the 3564-residue chain is CUB and sushi domain-containing protein 1 (3564 aa).

Positions 1-29 are cleaved as a signal peptide; the sequence is MTAWRKFKSLLLPLVLAVLCAGLLTAAKG. The Extracellular portion of the chain corresponds to 30–3487; that stretch reads QNCGGLVQGP…NHYQGTSSGS (3458 aa). Disulfide bonds link C32–C58, C145–C185, C171–C202, C208–C234, C349–C389, C375–C406, C411–C437, C527–C567, C553–C580, and C584–C610. Positions 32–140 constitute a CUB 1 domain; it reads CGGLVQGPNG…QGFKAMYEVL (109 aa). N40 and N57 each carry an N-linked (GlcNAc...) asparagine glycan. The Sushi 1 domain maps to 143–204; sequence HTCGNPGEIL…WDFPAPFCRA (62 aa). In terms of domain architecture, CUB 2 spans 208 to 312; the sequence is CGGTLRGTSG…KGFNAQFQVK (105 aa). In terms of domain architecture, Sushi 2 spans 347-408; that stretch reads DMCPDPGIPD…WNDHRPICRA (62 aa). The region spanning 411 to 522 is the CUB 3 domain; it reads CGSNLRGPSG…PGFKAVYQEI (112 aa). In terms of domain architecture, Sushi 3 spans 525–582; that stretch reads GGCGDPGIPAYGKRTGSSFLHGDTLTFECQAAFELVGERVITCQKNNQWSGNKPSCVF. In terms of domain architecture, CUB 4 spans 584–692; it reads CFFNFTAPSG…RGFNITYTTF (109 aa). N-linked (GlcNAc...) asparagine glycosylation is found at N587 and N686. The region spanning 695 to 756 is the Sushi 4 domain; that stretch reads NECHDPGIPV…WSSTVPRCEA (62 aa). 6 cysteine pairs are disulfide-bonded: C697–C738, C723–C754, C758–C784, C873–C913, C899–C926, and C930–C956. In terms of domain architecture, CUB 5 spans 758–866; sequence CGGHLTASSG…VGFLIHYESV (109 aa). One can recognise a Sushi 5 domain in the interval 871 to 928; sequence DSCLDPGIPVNGQRHGSNFGIRSTVTFSCDPGYTLSDDEPLVCEKNHQWNHALPSCDA. A CUB 6 domain is found at 930–1040; the sequence is CGGYIHGKSG…EGFNITFAEY (111 aa). N955, N1015, and N1034 each carry an N-linked (GlcNAc...) asparagine glycan. The Sushi 6 domain occupies 1043 to 1102; that stretch reads EPCDDPGVPAFSRRIGFQFGVGDTLAFTCFQGYRLEGATKLTCLGGGRRVWSAPLPRCVA. 3 cysteine pairs are disulfide-bonded: C1045/C1085, C1071/C1100, and C1104/C1130. A CUB 7 domain is found at 1104–1212; sequence CGASVKGNEG…QGFQLTYTSF (109 aa). N1184 and N1197 each carry an N-linked (GlcNAc...) asparagine glycan. One can recognise a Sushi 7 domain in the interval 1215 to 1275; it reads VKCEDPGIPN…WDKPMPSCVA (61 aa). Intrachain disulfides connect C1217–C1258, C1244–C1273, C1277–C1304, C1391–C1431, C1417–C1447, C1451–C1477, C1564–C1604, C1590–C1621, C1625–C1651, C1741–C1781, C1767–C1798, and C1802–C1828. Positions 1277-1386 constitute a CUB 8 domain; that stretch reads CGGLVHAATS…SGFSIQFSTS (110 aa). The Sushi 8 domain maps to 1389–1449; the sequence is STCNDPGMPQ…WQPDPPSCIA (61 aa). N-linked (GlcNAc...) asparagine glycosylation is present at N1399. Residues 1451 to 1559 enclose the CUB 9 domain; sequence CGGNLTGPAG…SGFAIEFKEK (109 aa). N1454 and N1572 each carry an N-linked (GlcNAc...) asparagine glycan. A Sushi 9 domain is found at 1562 to 1623; it reads EACFDPGNIM…WDRALPACQA (62 aa). Residues 1625-1733 enclose the CUB 10 domain; sequence CGGQYTGSEG…RGFHFVYQAV (109 aa). Residue N1644 is glycosylated (N-linked (GlcNAc...) asparagine). A Sushi 10 domain is found at 1739–1800; that stretch reads TQCSSVPEPR…WNDTIPSCVV (62 aa). N1792, N1805, and N1882 each carry an N-linked (GlcNAc...) asparagine glycan. The 109-residue stretch at 1802–1910 folds into the CUB 11 domain; the sequence is CSGNFTQRRG…AGFHLEYKTV (109 aa). Positions 1913-1972 constitute a Sushi 11 domain; the sequence is AACQEPALPSNGIKIGDRYMVNDVLSFQCEPGYTLQGRSHISCMPGTVRRWNYPSPLCIA. 3 disulfide bridges follow: C1915–C1955, C1941–C1970, and C1974–C2000. Positions 1974–2082 constitute a CUB 12 domain; the sequence is CGGTLTSMSG…QGFKLSYQAY (109 aa). N-linked (GlcNAc...) asparagine glycosylation occurs at N2018. In terms of domain architecture, Sushi 12 spans 2085-2144; it reads QNCPDPPAFQNGFMINSDYSVGQSISFECYPGYILLGHPVLTCQHGTDRNWNYPFPRCDA. Intrachain disulfides connect C2087–C2127, C2113–C2142, and C2146–C2172. A CUB 13 domain is found at 2146–2257; sequence CGYNVTSQNG…LNFHAFQLKR (112 aa). Residues N2149, N2154, and N2187 are each glycosylated (N-linked (GlcNAc...) asparagine). In terms of domain architecture, Sushi 13 spans 2256–2317; the sequence is KRCPPPPAVP…FQGSPPTCEA (62 aa). Intrachain disulfides connect C2258–C2300, C2286–C2315, and C2319–C2347. One can recognise a CUB 14 domain in the interval 2319–2430; that stretch reads CPANEVRTES…KGFKIRYAAP (112 aa). N-linked (GlcNAc...) asparagine glycosylation is found at N2358, N2394, N2400, N2445, N2470, and N2503. 15 Sushi domains span residues 2430-2492, 2493-2554, 2555-2619, 2620-2677, 2678-2735, 2736-2793, 2794-2856, 2857-2914, 2918-2975, 2976-3034, 3035-3094, 3095-3152, 3153-3210, 3214-3272, and 3273-3332; these read PYCS…LCQA, VSCG…TCKP, VPCP…RCKV, ISCG…RCLA, GHCG…VCVP, ITCG…ICRV, VNCS…KCLA, ISCG…HCSG, GFCG…VCEA, VSCG…DCTI, ISCG…LCKA, VLCN…QCLP, VFCG…TCID, TACP…ECIP, and HACR…VCKS. 12 disulfides stabilise this stretch: C2432–C2473, C2459–C2490, C2495–C2537, C2521–C2552, C2557–C2602, C2588–C2617, C2622–C2662, C2648–C2675, C2680–C2720, C2706–C2733, C2738–C2778, and C2764–C2791. The N-linked (GlcNAc...) asparagine glycan is linked to N2605. N-linked (GlcNAc...) asparagine glycans are attached at residues N2750 and N2761. N-linked (GlcNAc...) asparagine glycosylation is present at N2795. Cystine bridges form between C2796-C2841, C2827-C2854, C2859-C2899, C2885-C2912, C2920-C2960, C2946-C2973, C2978-C3019, C3005-C3032, C3037-C3079, C3063-C3092, C3097-C3137, C3123-C3150, C3155-C3195, C3181-C3208, C3216-C3257, C3243-C3270, C3275-C3317, and C3302-C3330. Residue N2894 is glycosylated (N-linked (GlcNAc...) asparagine). N-linked (GlcNAc...) asparagine glycosylation is present at N2963. N-linked (GlcNAc...) asparagine glycosylation is found at N3022, N3056, and N3086. 2 N-linked (GlcNAc...) asparagine glycosylation sites follow: N3228 and N3260. 3 N-linked (GlcNAc...) asparagine glycosylation sites follow: N3339, N3379, and N3386. Residues 3488–3508 form a helical membrane-spanning segment; it reads VAAAILVPFFALILSGFAFYL. The Cytoplasmic segment spans residues 3509–3564; it reads YKHRTRPKVQYNGYAGHENSNGQASFENPMYDTNLKPTEAKAVRFDTTLNTVCTVV.

The protein belongs to the CSMD family.

Its subcellular location is the membrane. The polypeptide is CUB and sushi domain-containing protein 1 (Csmd1) (Mus musculus (Mouse)).